The chain runs to 259 residues: Peptide methionine sulfoxide reductase (259 aa).

Residues T66–P90 are disordered.

The protein belongs to the MsrA Met sulfoxide reductase family.

The enzyme catalyses L-methionyl-[protein] + [thioredoxin]-disulfide + H2O = L-methionyl-(S)-S-oxide-[protein] + [thioredoxin]-dithiol. It carries out the reaction [thioredoxin]-disulfide + L-methionine + H2O = L-methionine (S)-S-oxide + [thioredoxin]-dithiol. In terms of biological role, has an important function as a repair enzyme for proteins that have been inactivated by oxidation. Catalyzes the reversible oxidation-reduction of methionine sulfoxide in proteins to methionine. This is Peptide methionine sulfoxide reductase from Lactuca sativa (Garden lettuce).